The primary structure comprises 1088 residues: RNA-directed RNA polymerase (1088 aa).

One can recognise a RdRp catalytic domain in the interval 501-687; sequence LSYGDVTRFL…AKRYIAGGKI (187 aa).

This sequence belongs to the reoviridae RNA-directed RNA polymerase family. As to quaternary structure, interacts with VP3 (Potential). Interacts with VP2; this interaction activates VP1. Interacts with NSP5; this interaction is probably necessary for the formation of functional virus factories. Interacts with NSP2; this interaction is weak. It depends on Mg(2+) as a cofactor.

The protein resides in the virion. The catalysed reaction is RNA(n) + a ribonucleoside 5'-triphosphate = RNA(n+1) + diphosphate. RNA-directed RNA polymerase that is involved in both transcription and genome replication. Together with VP3 capping enzyme, forms an enzyme complex positioned near the channels situated at each of the five-fold vertices of the core. Following infection, the outermost layer of the virus is lost, leaving a double-layered particle (DLP) made up of the core and VP6 shell. VP1 then catalyzes the transcription of fully conservative plus-strand genomic RNAs that are extruded through the DLP's channels into the cytoplasm where they function as mRNAs for translation of viral proteins. One copy of each of the viral (+)RNAs is also recruited during core assembly, together with newly synthesized polymerase complexes and VP2. The polymerase of these novo-formed particles catalyzes the synthesis of complementary minus-strands leading to dsRNA formation. To do so, the polymerase specifically recognizes and binds 4 bases 5'-UGUG-3' in the conserved 3'-sequence of plus-strand RNA templates. VP2 presumably activates the autoinhibited VP1-RNA complex to coordinate packaging and genome replication. Once dsRNA synthesis is complete, the polymerase switches to the transcriptional mode, thus providing secondary transcription. The chain is RNA-directed RNA polymerase from Homo sapiens (Human).